A 321-amino-acid polypeptide reads, in one-letter code: Malate dehydrogenase (321 aa).

NAD(+) is bound by residues Gly10–Gly15 and Asp34. Arg83 and Arg89 together coordinate substrate. Residues Asn96 and Ile119–Asn121 contribute to the NAD(+) site. Substrate is bound by residues Asn121 and Arg152. His176 functions as the Proton acceptor in the catalytic mechanism.

It belongs to the LDH/MDH superfamily. MDH type 3 family.

The catalysed reaction is (S)-malate + NAD(+) = oxaloacetate + NADH + H(+). Functionally, catalyzes the reversible oxidation of malate to oxaloacetate. The protein is Malate dehydrogenase of Bartonella bacilliformis (strain ATCC 35685 / KC583 / Herrer 020/F12,63).